We begin with the raw amino-acid sequence, 25 residues long: Kappa-conotoxin RIIIJ (25 aa).

4-hydroxyproline is present on residues Pro-2, Pro-3, Pro-7, Pro-8, Pro-13, Pro-15, and Pro-21. Intrachain disulfides connect Cys-4-Cys-17, Cys-5-Cys-22, and Cys-12-Cys-23.

Belongs to the conotoxin M superfamily. In terms of tissue distribution, expressed by the venom duct.

The protein resides in the secreted. Kappa-conotoxins inhibits voltage-gated potassium channels. This toxin dose-dependently and reversibly inhibits the Kv1.2/KCNA2 channel in mammalia. Does not exert protective effect on cardiac tissue when administered after an ischemic event. In Conus radiatus (Rayed cone), this protein is Kappa-conotoxin RIIIJ.